Here is a 228-residue protein sequence, read N- to C-terminus: Small ribosomal subunit protein uS3 (228 aa).

A KH type-2 domain is found at 39–107 (VREYLQDKLK…PVHINIEEIR (69 aa)).

This sequence belongs to the universal ribosomal protein uS3 family. In terms of assembly, part of the 30S ribosomal subunit. Forms a tight complex with proteins S10 and S14.

In terms of biological role, binds the lower part of the 30S subunit head. Binds mRNA in the 70S ribosome, positioning it for translation. This Pseudomonas aeruginosa (strain UCBPP-PA14) protein is Small ribosomal subunit protein uS3.